Reading from the N-terminus, the 551-residue chain is Cytochrome P450 monooxygenase FCK2 (551 aa).

A run of 3 helical transmembrane segments spans residues 8 to 28 (FDPANYSLFFVLGVLTHVFIF), 35 to 55 (LHVFNILQAFAVLESSLVYIV), and 69 to 89 (VTTISSCFTLSTLMGLLISIL). A glycan (N-linked (GlcNAc...) asparagine) is linked at Asn-258. Cys-493 contacts heme.

Belongs to the cytochrome P450 family. Requires heme as cofactor.

The protein resides in the membrane. It participates in secondary metabolite biosynthesis. Its function is as follows. Cytochrome P450 monooxygenase; part of the gene cluster that mediates the biosynthesis of cytokinins such as fusatin, fusatinic acids or 8-oxofusatin, known for their growth promoting and anti-senescence activities toward host plants. FCK1 is a bifunctional enzyme that performs the first steps in the biosynthesis of Fusarium cytokinins. It first condenses adenosine monophosphate (AMP) with dimethylallyl diphosphate (DMAPP) to yield isoprenyl adenosine monophosphate. It then catalyzes the removal of the phosphoribose to produce isopentenylaldehyde. The cytochrome P450 monooxygenase then converts isopentenylaldehyde to trans-zeatin. A condensation step converts trans-zeatin to fusatin which is further modified to produce fusatinic acid. The mechanism for oxidation of fusatin to fusatinic acid remains unknown. 8-oxofusatin could be produced through several pathways, via direct oxygenation of fusatin, or via the 8-oxo-pentenyladenine intermediate which itself must arise from either the prenylation of 8-oxo-AMP by FCK1 and/or oxygenation of isopentenylaldehyde. Both the FCK3 and FCK4 enzymes act downstream of the identified cytokinins to produce yet unidentified compounds. The sequence is that of Cytochrome P450 monooxygenase FCK2 from Fusarium pseudograminearum (strain CS3096) (Wheat and barley crown-rot fungus).